The chain runs to 1807 residues: Atrochrysone carboxylic acid synthase Agnpks1 (1807 aa).

An N-terminal acylcarrier protein transacylase domain (SAT) region spans residues 41–173 (LFRELHNHSK…ITGAQVIRQA (133 aa)). Positions 411-845 (QSKIAIVGMS…GGNTTILLEE (435 aa)) constitute a Ketosynthase family 3 (KS3) domain. Active-site for beta-ketoacyl synthase activity residues include Cys-584, His-720, and His-763. The tract at residues 946–1265 (FTFTGQGASY…SLAALHCAGV (320 aa)) is malonyl-CoA:ACP transacylase (MAT) domain. Residues 1334 to 1653 (TSTVHQIIQE…RILLSRFFSA (320 aa)) are product template (PT) domain. The N-terminal hotdog fold stretch occupies residues 1338–1473 (HQIIQESIDG…ATLIYGDPSE (136 aa)). The PKS/mFAS DH domain occupies 1338–1648 (HQIIQESIDG…FRRYPRILLS (311 aa)). His-1370 (proton acceptor; for dehydratase activity) is an active-site residue. The interval 1500–1648 (VANRFNHQMA…FRRYPRILLS (149 aa)) is C-terminal hotdog fold. Residue Asp-1559 is the Proton donor; for dehydratase activity of the active site. In terms of domain architecture, Carrier spans 1732 to 1806 (DTTTAKAIQI…DLRSWLEEYY (75 aa)). Ser-1766 is modified (O-(pantetheine 4'-phosphoryl)serine).

The catalysed reaction is holo-[ACP] + 8 malonyl-CoA + 8 H(+) = atrochrysone carboxyl-[ACP] + 8 CO2 + 8 CoA + 2 H2O. It functions in the pathway secondary metabolite biosynthesis. Its function is as follows. Non-reducing polyketide synthase; part of the gene cluster that mediates the biosynthesis of agnestins, dihydroxy-xanthone metabolites. The pathway begins with the assembly and cyclization of atrochrysone thioester by the non-reducing polyketide synthase Agnpks1. The atrochrysone carboxyl ACP thioesterase AgnL7 then breaks the thioester bond and releases the atrochrysone carboxylic acid as the first enzyme-free intermediate. The decarboxylase AgnL1 then catalyzes the concerted decarboxylation-elimination required to convert atochrysone carboxylic acid into emodin anthrone, which is further oxidized to emodin by the anthrone oxygenase AgnL2. Emodin then undergoes reduction catalyzed by the oxidoreductase AgnL4 to yield the dihydroquinone tautomer which is the substrate for reduction by the short chain dehydrogenase AgnL6 reduction to produce hydroxyketone, followed by AgnL8 dehydration and likely spontaneous autoxidation to chrysophanol. Baeyer-Villiger oxidation by the oxidase AgnL3 leads to monodictyphenone via cleavage of the C-10/C-10a bond of chrysophanol. Alternative cleavage at the C-4a/C-10 bond of chrysophanol also leads to the formation some cephalone F. Further conversion to agnestins A and B, requires reduction to dihydro-monodictyphenone, oxidation to agnestin C probably via an epoxide, and rearrangement to either agnestin A or agnestin B directly, although agnestin A or agnestin B can also interconvert. Within the cluster, AgnR1 is the only unassigned oxidoreductase present which could be involved in this conversion. However, AgnR1 seems not to be involved in this step, and thus genes involved in the proposed oxidation/reduction may be located elsewhere on the genome. Further agnestin A derivatives are probably formed by spontaneous decarboxylations, dehydrations and methanolysis reactions. In Paecilomyces divaricatus (Penicillium divaricatum), this protein is Atrochrysone carboxylic acid synthase Agnpks1.